We begin with the raw amino-acid sequence, 89 residues long: Small ribosomal subunit protein uS15 (89 aa).

This sequence belongs to the universal ribosomal protein uS15 family. In terms of assembly, part of the 30S ribosomal subunit. Forms a bridge to the 50S subunit in the 70S ribosome, contacting the 23S rRNA.

One of the primary rRNA binding proteins, it binds directly to 16S rRNA where it helps nucleate assembly of the platform of the 30S subunit by binding and bridging several RNA helices of the 16S rRNA. Its function is as follows. Forms an intersubunit bridge (bridge B4) with the 23S rRNA of the 50S subunit in the ribosome. The chain is Small ribosomal subunit protein uS15 from Klebsiella pneumoniae subsp. pneumoniae (strain ATCC 700721 / MGH 78578).